Consider the following 233-residue polypeptide: Nickel import system ATP-binding protein NikE (233 aa).

An ABC transporter domain is found at 2 to 228 (IELKHVTFGY…DRHPYTKELV (227 aa)). ATP is bound at residue 35 to 42 (GESGCGKS).

The protein belongs to the ABC transporter superfamily. The complex is composed of two ATP-binding proteins (NikD and NikE), two transmembrane proteins (NikB and NikC) and a solute-binding protein (NikA).

The protein resides in the cell membrane. The enzyme catalyses Ni(2+)(out) + ATP + H2O = Ni(2+)(in) + ADP + phosphate + H(+). Functionally, part of the ABC transporter complex NikABCDE (Opp2) involved in nickel import. Probably responsible for energy coupling to the transport system. This chain is Nickel import system ATP-binding protein NikE, found in Staphylococcus aureus (strain USA300).